A 1044-amino-acid chain; its full sequence is Probable translation initiation factor IF-2 (1044 aa).

Residues F173 to I265 form the DOD-type homing endonuclease domain. One can recognise a tr-type G domain in the interval T451–L668. Residues D524 to H528 and N578 to D581 each bind GTP.

Belongs to the TRAFAC class translation factor GTPase superfamily. Classic translation factor GTPase family. IF-2 subfamily. Post-translationally, this protein undergoes a protein self splicing that involves a post-translational excision of the intervening region (intein) followed by peptide ligation.

Function in general translation initiation by promoting the binding of the formylmethionine-tRNA to ribosomes. Seems to function along with eIF-2. This chain is Probable translation initiation factor IF-2 (infB), found in Pyrococcus horikoshii (strain ATCC 700860 / DSM 12428 / JCM 9974 / NBRC 100139 / OT-3).